The sequence spans 283 residues: Transport and Golgi organization protein 2 (283 aa).

It belongs to the Tango2 family.

The protein localises to the cytoplasm. It localises to the mitochondrion. It is found in the golgi apparatus. May play a role in Golgi organization. The polypeptide is Transport and Golgi organization protein 2 (Tango2) (Drosophila melanogaster (Fruit fly)).